The following is a 225-amino-acid chain: UPF0758 protein NMB1038 (225 aa).

The MPN domain maps to 102 to 224 (VLSDPDTVAD…VCSFRQLGLM (123 aa)). Zn(2+) is bound by residues histidine 173, histidine 175, and aspartate 186. The JAMM motif motif lies at 173–186 (HNHPGGSPEPSQED).

The protein belongs to the UPF0758 family.

The polypeptide is UPF0758 protein NMB1038 (Neisseria meningitidis serogroup B (strain ATCC BAA-335 / MC58)).